A 34-amino-acid chain; its full sequence is Photosystem I reaction center subunit XII (34 aa).

Residues 9–29 (LIALSLIVVVHAGVLALRLGI) traverse the membrane as a helical segment.

It belongs to the PsaM family.

The protein localises to the cellular thylakoid membrane. The sequence is that of Photosystem I reaction center subunit XII from Prochlorococcus marinus (strain MIT 9312).